The primary structure comprises 432 residues: Adenylosuccinate synthetase (432 aa).

Residues 13–19 (GDEGKGK) and 41–43 (GHT) contribute to the GTP site. Asp-14 acts as the Proton acceptor in catalysis. The Mg(2+) site is built by Asp-14 and Gly-41. Residues 14 to 17 (DEGK), 39 to 42 (NAGH), Thr-130, Arg-144, Gln-225, Thr-240, and Arg-304 each bind IMP. His-42 functions as the Proton donor in the catalytic mechanism. 300 to 306 (ATTGRRR) contacts substrate. GTP is bound by residues Arg-306, 332–334 (KLD), and 415–417 (STG).

It belongs to the adenylosuccinate synthetase family. Homodimer. Mg(2+) serves as cofactor.

The protein localises to the cytoplasm. It carries out the reaction IMP + L-aspartate + GTP = N(6)-(1,2-dicarboxyethyl)-AMP + GDP + phosphate + 2 H(+). Its pathway is purine metabolism; AMP biosynthesis via de novo pathway; AMP from IMP: step 1/2. Functionally, plays an important role in the de novo pathway of purine nucleotide biosynthesis. Catalyzes the first committed step in the biosynthesis of AMP from IMP. This Pectobacterium carotovorum subsp. carotovorum (strain PC1) protein is Adenylosuccinate synthetase.